The following is a 156-amino-acid chain: Snaclec rhinocetin subunit alpha (156 aa).

Residues 1–23 (MGRFIFLSSGWLVVFLSLSGTGA) form the signal peptide. Disulfide bonds link cysteine 27–cysteine 38, cysteine 55–cysteine 150, and cysteine 125–cysteine 142. The region spanning 34–151 (YEGHCYKFFF…CGDNYPFVCM (118 aa)) is the C-type lectin domain.

The protein belongs to the snaclec family. In terms of assembly, heterodimer; disulfide-linked. In terms of tissue distribution, expressed by the venom gland.

It localises to the secreted. In terms of biological role, antagonist of the alpha-2 subunit of the integrin alpha-2/beta-1 (ITGA2/ITGB1) on human platelets and endothelial cells. This protein inhibits collagen-stimulated activation of human platelets in a dose-dependent manner. In addition, it antagonizes the binding of monoclonal antibodies against the alpha-2 subunit of integrin alpha-2/beta-1 to platelets and it coimmunoprecipitates with this integrin. In Bitis rhinoceros (West African gaboon viper), this protein is Snaclec rhinocetin subunit alpha.